A 209-amino-acid polypeptide reads, in one-letter code: Regulator of G-protein signaling 1 (209 aa).

The RGS domain occupies 85-200 (SLEKLLANQT…LKSDIYLNLL (116 aa)).

In terms of assembly, interacts with GNAI1 and GNAQ. As to expression, detected in peripheral blood monocytes. Expression is relatively low in B-cells and chronic lymphocytic leukemia B-cells; however, in other types of malignant B-cell such as non-Hodgkin lymphoma and hairy cell leukemia, expression is constitutively high.

The protein resides in the cell membrane. The protein localises to the cytoplasm. It is found in the cytosol. Its function is as follows. Regulates G protein-coupled receptor signaling cascades, including signaling downstream of the N-formylpeptide chemoattractant receptors and leukotriene receptors. Inhibits B cell chemotaxis toward CXCL12. Inhibits signal transduction by increasing the GTPase activity of G protein alpha subunits thereby driving them into their inactive GDP-bound form. In Homo sapiens (Human), this protein is Regulator of G-protein signaling 1 (RGS1).